We begin with the raw amino-acid sequence, 601 residues long: Sulfite reductase [NADPH] flavoprotein alpha-component (601 aa).

Positions 65–203 (ITIISASQTG…NYNKWSQDLL (139 aa)) constitute a Flavodoxin-like domain. FMN contacts are provided by residues 71-76 (SQTGNA), 118-121 (STQG), and 154-163 (LGDTSYNLFC). The FAD-binding FR-type domain occupies 236-450 (KNPAEGIILT…IQTNDNFRLP (215 aa)). FAD is bound by residues threonine 324, isoleucine 358, 388–391 (RLYS), 406–408 (TVG), and 421–424 (GGAS). Residues 521-522 (SQ), 527-531 (KIYVQ), and aspartate 563 each bind NADP(+). Residue tyrosine 601 coordinates FAD.

It belongs to the NADPH-dependent sulphite reductase flavoprotein subunit CysJ family. In the N-terminal section; belongs to the flavodoxin family. The protein in the C-terminal section; belongs to the flavoprotein pyridine nucleotide cytochrome reductase family. Alpha(8)-beta(8). The alpha component is a flavoprotein, the beta component is a hemoprotein. The cofactor is FAD. FMN serves as cofactor.

It carries out the reaction hydrogen sulfide + 3 NADP(+) + 3 H2O = sulfite + 3 NADPH + 4 H(+). It participates in sulfur metabolism; hydrogen sulfide biosynthesis; hydrogen sulfide from sulfite (NADPH route): step 1/1. Component of the sulfite reductase complex that catalyzes the 6-electron reduction of sulfite to sulfide. This is one of several activities required for the biosynthesis of L-cysteine from sulfate. The flavoprotein component catalyzes the electron flow from NADPH -&gt; FAD -&gt; FMN to the hemoprotein component. The sequence is that of Sulfite reductase [NADPH] flavoprotein alpha-component from Buchnera aphidicola subsp. Acyrthosiphon pisum (strain APS) (Acyrthosiphon pisum symbiotic bacterium).